The chain runs to 621 residues: Cystathionine gamma-synthase (621 aa).

Lys429 bears the N6-(pyridoxal phosphate)lysine mark.

This sequence belongs to the trans-sulfuration enzymes family. MET7 subfamily. In terms of assembly, both met-3 and met-7 are required to form a functional cystathionine gamma-synthase. Pyridoxal 5'-phosphate serves as cofactor.

The enzyme catalyses O-succinyl-L-homoserine + L-cysteine = L,L-cystathionine + succinate + H(+). It functions in the pathway amino-acid biosynthesis; L-methionine biosynthesis via de novo pathway; L-cystathionine from O-succinyl-L-homoserine: step 1/1. Its function is as follows. Catalyzes the formation of L-cystathionine from O-succinyl-L-homoserine (OSHS) and L-cysteine, via a gamma-replacement reaction. In the absence of thiol, catalyzes gamma-elimination to form 2-oxobutanoate, succinate and ammonia. This is Cystathionine gamma-synthase (met-7) from Neurospora crassa (strain ATCC 24698 / 74-OR23-1A / CBS 708.71 / DSM 1257 / FGSC 987).